The sequence spans 756 residues: 3-O-alpha-D-glucosyl-L-rhamnose phosphorylase (756 aa).

358–359 (WD) serves as a coordination point for substrate. Glutamate 486 functions as the Proton donor in the catalytic mechanism. 590–591 (KQ) contacts substrate.

It belongs to the glycosyl hydrolase 65 family. As to quaternary structure, monomer.

The protein resides in the cytoplasm. It catalyses the reaction 3-O-alpha-D-glucosyl-L-rhamnose + phosphate = beta-D-glucose 1-phosphate + L-rhamnopyranose. Functionally, phosphorylase showing strict alpha-1,3-regioselectivity and producing 3-O-alpha-D-glucopyranosyl-L-rhamnopyranose. Specific for L-rhamnose as acceptor and beta-D-glucose 1-phosphate as donor. Does not phosphorylate alpha,alpha-trehalose, kojibiose, nigerose, or maltose. The chain is 3-O-alpha-D-glucosyl-L-rhamnose phosphorylase from Lachnoclostridium phytofermentans (strain ATCC 700394 / DSM 18823 / ISDg) (Clostridium phytofermentans).